The following is a 582-amino-acid chain: DNA mismatch repair protein MutL (582 aa).

The protein belongs to the DNA mismatch repair MutL/HexB family.

In terms of biological role, this protein is involved in the repair of mismatches in DNA. It is required for dam-dependent methyl-directed DNA mismatch repair. May act as a 'molecular matchmaker', a protein that promotes the formation of a stable complex between two or more DNA-binding proteins in an ATP-dependent manner without itself being part of a final effector complex. The chain is DNA mismatch repair protein MutL from Buchnera aphidicola subsp. Schizaphis graminum (strain Sg).